A 547-amino-acid chain; its full sequence is Chaperonin GroEL (547 aa).

ATP-binding positions include 30-33, lysine 51, 87-91, glycine 415, 479-481, and aspartate 495; these read TLGP, DGTTT, and NAA.

The protein belongs to the chaperonin (HSP60) family. In terms of assembly, forms a cylinder of 14 subunits composed of two heptameric rings stacked back-to-back. Interacts with the co-chaperonin GroES.

The protein localises to the cytoplasm. The catalysed reaction is ATP + H2O + a folded polypeptide = ADP + phosphate + an unfolded polypeptide.. Functionally, together with its co-chaperonin GroES, plays an essential role in assisting protein folding. The GroEL-GroES system forms a nano-cage that allows encapsulation of the non-native substrate proteins and provides a physical environment optimized to promote and accelerate protein folding. This is Chaperonin GroEL from Pseudomonas fluorescens (strain ATCC BAA-477 / NRRL B-23932 / Pf-5).